The following is a 585-amino-acid chain: Mycosin-5 (585 aa).

Residues M1 to A39 form the signal peptide. Positions P83–L521 constitute a Peptidase S8 domain. Residues D109 and H141 each act as charge relay system in the active site. Over residues V163–T173 the composition is skewed to low complexity. Residues V163–F269 form a disordered region. Pro residues-rich tracts occupy residues P196–P224 and N252–D267. S466 serves as the catalytic Charge relay system. A helical membrane pass occupies residues V552–F572.

Belongs to the peptidase S8 family.

It localises to the cell membrane. This Mycobacterium tuberculosis (strain ATCC 25618 / H37Rv) protein is Mycosin-5.